Reading from the N-terminus, the 349-residue chain is tRNA pseudouridine synthase D (349 aa).

Position 27 (F27) interacts with substrate. The active-site Nucleophile is D80. N129 contacts substrate. A TRUD domain is found at 155–303 (GVPNYFGAQR…VEAARRAMLL (149 aa)). F329 provides a ligand contact to substrate.

It belongs to the pseudouridine synthase TruD family.

The catalysed reaction is uridine(13) in tRNA = pseudouridine(13) in tRNA. In terms of biological role, responsible for synthesis of pseudouridine from uracil-13 in transfer RNAs. This Escherichia coli (strain 55989 / EAEC) protein is tRNA pseudouridine synthase D.